A 797-amino-acid polypeptide reads, in one-letter code: Protocadherin beta-11 (797 aa).

Positions 1–26 (MENGGTRTQQIRQVLLLFVLLGMSQA) are cleaved as a signal peptide. The Extracellular portion of the chain corresponds to 27 to 690 (GSETWSFSVA…AQTDFLTVYL (664 aa)). Cadherin domains are found at residues 35-133 (VAEE…SPIF), 138-242 (MLLE…SPEF), 247-347 (YEVK…APEI), 352-451 (ITSP…APTF), and 456-561 (YTLF…SPFV). N-linked (GlcNAc...) asparagine glycosylation is found at N418, N436, N487, and N567. In terms of domain architecture, Cadherin 6 spans 568-671 (GSAPCTELVP…LVDGFSQPFL (104 aa)). The chain crosses the membrane as a helical span at residues 691–711 (VVALASVSSLFFFSVLLFVAV). Residues 712–797 (RLCRRSRAAS…TFQNSFGFNF (86 aa)) lie on the Cytoplasmic side of the membrane.

It is found in the cell membrane. Functionally, potential calcium-dependent cell-adhesion protein. May be involved in the establishment and maintenance of specific neuronal connections in the brain. This is Protocadherin beta-11 (PCDHB11) from Pan troglodytes (Chimpanzee).